Here is a 418-residue protein sequence, read N- to C-terminus: Tubulin alpha chain (418 aa).

Positions 11, 71, 140, 144, 179, 206, and 228 each coordinate GTP. Glutamate 71 lines the Mg(2+) pocket. The active site involves glutamate 255.

The protein belongs to the tubulin family. As to quaternary structure, dimer of alpha and beta chains. A typical microtubule is a hollow water-filled tube with an outer diameter of 25 nm and an inner diameter of 15 nM. Alpha-beta heterodimers associate head-to-tail to form protofilaments running lengthwise along the microtubule wall with the beta-tubulin subunit facing the microtubule plus end conferring a structural polarity. Microtubules usually have 13 protofilaments but different protofilament numbers can be found in some organisms and specialized cells. Requires Mg(2+) as cofactor.

The protein localises to the cytoplasm. It is found in the cytoskeleton. It carries out the reaction GTP + H2O = GDP + phosphate + H(+). Tubulin is the major constituent of microtubules, a cylinder consisting of laterally associated linear protofilaments composed of alpha- and beta-tubulin heterodimers. Microtubules grow by the addition of GTP-tubulin dimers to the microtubule end, where a stabilizing cap forms. Below the cap, tubulin dimers are in GDP-bound state, owing to GTPase activity of alpha-tubulin. The chain is Tubulin alpha chain (TUB1) from Ajellomyces capsulatus (Darling's disease fungus).